A 302-amino-acid chain; its full sequence is 4-diphosphocytidyl-2-C-methyl-D-erythritol kinase (302 aa).

Lys-11 is a catalytic residue. Position 93–103 (Pro-93–Thr-103) interacts with ATP. Asp-135 is a catalytic residue.

The protein belongs to the GHMP kinase family. IspE subfamily.

It carries out the reaction 4-CDP-2-C-methyl-D-erythritol + ATP = 4-CDP-2-C-methyl-D-erythritol 2-phosphate + ADP + H(+). It participates in isoprenoid biosynthesis; isopentenyl diphosphate biosynthesis via DXP pathway; isopentenyl diphosphate from 1-deoxy-D-xylulose 5-phosphate: step 3/6. Catalyzes the phosphorylation of the position 2 hydroxy group of 4-diphosphocytidyl-2C-methyl-D-erythritol. This chain is 4-diphosphocytidyl-2-C-methyl-D-erythritol kinase, found in Gloeobacter violaceus (strain ATCC 29082 / PCC 7421).